The sequence spans 803 residues: Protein AMEIOTIC 1 homolog (803 aa).

2 disordered regions span residues 21–64 (RPQV…QSLS) and 264–333 (RLRQ…RWSA). Residues 39–50 (NGKDDANHDESK) show a composition bias toward basic and acidic residues. A compositionally biased stretch (polar residues) spans 51 to 64 (NQSPGLPLSRQSLS). The segment covering 283–295 (KREEAESSMDKSR) has biased composition (basic and acidic residues). Basic residues predominate over residues 296–313 (AARKKKAKTYKSPKKVEK). The span at 314 to 333 (RRVVEAKDGDPRRGKDRWSA) shows a compositional bias: basic and acidic residues. Residues 450–567 (VKKKVEELAE…SSFLSLKEQL (118 aa)) are a coiled coil. Positions 651 to 688 (ISGGGSSSCPVASGPEQLPRSSSCPSIGPGGLPPSSRA) are disordered.

Its subcellular location is the nucleus. It is found in the chromosome. In terms of biological role, plays a fundamental role in building the proper chromosome structure at the beginning of meiosis in male meiocytes. Required for the transition from leptotene to zygotene in meiocytes. Required for homologous chromosome pairing. The sequence is that of Protein AMEIOTIC 1 homolog from Oryza sativa subsp. japonica (Rice).